We begin with the raw amino-acid sequence, 555 residues long: Intraflagellar transport protein 56 (555 aa).

TPR repeat units follow at residues 57-90 (LKNL…EDPD), 151-184 (IEDQ…HRDY), and 393-426 (DDFN…KYRN).

It belongs to the IFT56 family. As to quaternary structure, component of the IFT complex B.

The protein resides in the cell projection. It is found in the cilium. The protein localises to the flagellum. Component of the intraflagellar transport (IFT) complex B required for transport of proteins in the motile cilium. Required for transport of specific ciliary cargo proteins related to motility, while it is neither required for IFT complex B assembly or motion nor for cilium assembly. This chain is Intraflagellar transport protein 56, found in Chlamydomonas reinhardtii (Chlamydomonas smithii).